The chain runs to 349 residues: Aminomethyltransferase (349 aa).

This sequence belongs to the GcvT family. In terms of assembly, the glycine cleavage system is composed of four proteins: P, T, L and H.

The enzyme catalyses N(6)-[(R)-S(8)-aminomethyldihydrolipoyl]-L-lysyl-[protein] + (6S)-5,6,7,8-tetrahydrofolate = N(6)-[(R)-dihydrolipoyl]-L-lysyl-[protein] + (6R)-5,10-methylene-5,6,7,8-tetrahydrofolate + NH4(+). Its function is as follows. The glycine cleavage system catalyzes the degradation of glycine. The chain is Aminomethyltransferase from Thermus thermophilus (strain ATCC BAA-163 / DSM 7039 / HB27).